A 219-amino-acid chain; its full sequence is 2-C-methyl-D-erythritol 4-phosphate cytidylyltransferase (219 aa).

It belongs to the IspD/TarI cytidylyltransferase family. IspD subfamily.

The catalysed reaction is 2-C-methyl-D-erythritol 4-phosphate + CTP + H(+) = 4-CDP-2-C-methyl-D-erythritol + diphosphate. The protein operates within isoprenoid biosynthesis; isopentenyl diphosphate biosynthesis via DXP pathway; isopentenyl diphosphate from 1-deoxy-D-xylulose 5-phosphate: step 2/6. Its function is as follows. Catalyzes the formation of 4-diphosphocytidyl-2-C-methyl-D-erythritol from CTP and 2-C-methyl-D-erythritol 4-phosphate (MEP). The protein is 2-C-methyl-D-erythritol 4-phosphate cytidylyltransferase of Endomicrobium trichonymphae.